A 366-amino-acid chain; its full sequence is Sec-independent protein translocase protein TatC (366 aa).

7 helical membrane-spanning segments follow: residues 42-62, 70-90, 97-117, 134-154, 179-199, 207-227, and 230-250; these read VLAV…LFTM, HMPA…FIPL, AVFI…APGL, ILFY…VFGF, LFFA…LVIV, LAGF…ILTP, and VLSQ…GLFV. Acidic residues predominate over residues 266–279; it reads EAEESGAADDESDE. The disordered stretch occupies residues 266-366; it reads EAEESGAADD…PSPKKPDSPV (101 aa). Basic and acidic residues-rich tracts occupy residues 281–290 and 301–318; these read VSARHAEYEA and DMDK…RLES. The segment covering 319–333 has biased composition (polar residues); the sequence is DSSASDDGPESNTAG.

Belongs to the TatC family. In terms of assembly, the Tat system comprises two distinct complexes: a TatABC complex, containing multiple copies of TatA, TatB and TatC subunits, and a separate TatA complex, containing only TatA subunits. Substrates initially bind to the TatABC complex, which probably triggers association of the separate TatA complex to form the active translocon.

It localises to the cell inner membrane. In terms of biological role, part of the twin-arginine translocation (Tat) system that transports large folded proteins containing a characteristic twin-arginine motif in their signal peptide across membranes. Together with TatB, TatC is part of a receptor directly interacting with Tat signal peptides. The sequence is that of Sec-independent protein translocase protein TatC from Halothiobacillus neapolitanus (strain ATCC 23641 / c2) (Thiobacillus neapolitanus).